An 81-amino-acid chain; its full sequence is Photosystem I iron-sulfur center (81 aa).

4Fe-4S ferredoxin-type domains follow at residues 2 to 31 (AHSVKIYDTCIGCTQCVRACPTDVLEMIPW) and 39 to 68 (IASAPRTEDCVGCKRCESACPTDFLSVRVY). Residues Cys-11, Cys-14, Cys-17, Cys-21, Cys-48, Cys-51, Cys-54, and Cys-58 each coordinate [4Fe-4S] cluster.

As to quaternary structure, the eukaryotic PSI reaction center is composed of at least 11 subunits. [4Fe-4S] cluster is required as a cofactor.

Its subcellular location is the plastid. The protein localises to the chloroplast thylakoid membrane. The catalysed reaction is reduced [plastocyanin] + hnu + oxidized [2Fe-2S]-[ferredoxin] = oxidized [plastocyanin] + reduced [2Fe-2S]-[ferredoxin]. Functionally, apoprotein for the two 4Fe-4S centers FA and FB of photosystem I (PSI); essential for photochemical activity. FB is the terminal electron acceptor of PSI, donating electrons to ferredoxin. The C-terminus interacts with PsaA/B/D and helps assemble the protein into the PSI complex. Required for binding of PsaD and PsaE to PSI. PSI is a plastocyanin-ferredoxin oxidoreductase, converting photonic excitation into a charge separation, which transfers an electron from the donor P700 chlorophyll pair to the spectroscopically characterized acceptors A0, A1, FX, FA and FB in turn. The chain is Photosystem I iron-sulfur center from Psilotum nudum (Whisk fern).